The following is a 177-amino-acid chain: Ribonuclease clavin (177 aa).

A signal peptide spans 1–27; that stretch reads MVAIKNLVLVALTAVTALAMPSPLEER. 2 disulfides stabilise this stretch: Cys33-Cys175 and Cys103-Cys159. His77 is a catalytic residue. Positions 98-117 are disordered; the sequence is WGNSDCDRPPKHSKNGDGKN. Residues 102–117 show a composition bias toward basic and acidic residues; it reads DCDRPPKHSKNGDGKN. Glu123 functions as the Proton acceptor in the catalytic mechanism. Residue His164 is the Proton donor of the active site.

Belongs to the ribonuclease U2 family.

The protein resides in the secreted. Clavin has the same substrate specificity as alpha-sarcin. It is specific for purines in both single- and double-stranded RNA. Its toxic action on eukaryotic cells is the result of cleavage of a single phosphodiester bond in the 60S subunit of ribosomes. The sequence is that of Ribonuclease clavin (cla) from Aspergillus clavatus (strain ATCC 1007 / CBS 513.65 / DSM 816 / NCTC 3887 / NRRL 1 / QM 1276 / 107).